A 290-amino-acid polypeptide reads, in one-letter code: Ribosomal RNA small subunit methyltransferase A (290 aa).

Positions 27, 29, 54, 75, 100, and 125 each coordinate S-adenosyl-L-methionine.

Belongs to the class I-like SAM-binding methyltransferase superfamily. rRNA adenine N(6)-methyltransferase family. RsmA subfamily.

The protein resides in the cytoplasm. The catalysed reaction is adenosine(1518)/adenosine(1519) in 16S rRNA + 4 S-adenosyl-L-methionine = N(6)-dimethyladenosine(1518)/N(6)-dimethyladenosine(1519) in 16S rRNA + 4 S-adenosyl-L-homocysteine + 4 H(+). Functionally, specifically dimethylates two adjacent adenosines (A1518 and A1519) in the loop of a conserved hairpin near the 3'-end of 16S rRNA in the 30S particle. May play a critical role in biogenesis of 30S subunits. In Streptococcus pyogenes serotype M5 (strain Manfredo), this protein is Ribosomal RNA small subunit methyltransferase A.